We begin with the raw amino-acid sequence, 313 residues long: MPLGLRRKKKFNTKETSRLVEGEHTDAAVRSLPSPPAPARRLVFHTQLAHGSATGRVENFSSIQELYAKIAGVFEIPPSEILYCTLNTPKVDMGKLLGAQIGLEDFIFAHIKGIKKEVNVYKSEDSLGLTITDNGAGYAFIKRIKDDSIIDSVKTICVGDHIEAINGENIVGWRHFDVAKKLKELKKEELFTLTLIEPKKAFDMEPRSKAGKSSTGKIGTGRETLRLRSKGPATVEEVPSEAKEKAIGKVDDLLELYMGIRDTDLATTMFEAGKDKGNPDEFAVALDETLGDFAFPDEFVFDVWGVIGDAKQE.

A compositionally biased stretch (basic and acidic residues) spans 14–27; that stretch reads KETSRLVEGEHTDA. Positions 14–34 are disordered; it reads KETSRLVEGEHTDAAVRSLPS. Positions 117-197 constitute a PDZ domain; sequence EVNVYKSEDS…EELFTLTLIE (81 aa).

This sequence belongs to the GIPC family. In terms of assembly, probably interacts with SEMA5A.

The protein localises to the cytoplasm. This is PDZ domain-containing protein GIPC2 (GIPC2) from Bos taurus (Bovine).